The chain runs to 534 residues: Cytochrome c oxidase subunit 1 (534 aa).

The chain crosses the membrane as a helical span at residues 16–36 (VLYFIFSVFCGMAGTGMSMII). The Ca(2+) site is built by glutamate 39 and glycine 44. Histidine 62 is a Fe(II)-heme a binding site. 6 helical membrane-spanning segments follow: residues 64 to 84 (ILMV…NYLL), 101 to 121 (ISFW…LVES), 147 to 167 (AIFA…NFIV), 183 to 203 (PLFV…LPVL), 235 to 255 (LFWF…FGVI), and 267 to 287 (VFGE…GFLV). Residue histidine 241 participates in Cu cation binding. Positions 241–245 (HPEVY) form a cross-link, 1'-histidyl-3'-tyrosine (His-Tyr). Tyrosine 245 contacts O2. Residues histidine 290 and histidine 291 each coordinate Cu cation. Transmembrane regions (helical) follow at residues 310–330 (MIIA…IYGG) and 338–358 (MMYA…GVAL). Mg(2+) contacts are provided by histidine 368 and aspartate 369. Transmembrane regions (helical) follow at residues 372–392 (YVVA…MFAG) and 414–434 (FWLI…LGIN). Histidine 376 lines the heme a3 pocket. Histidine 378 is a binding site for Fe(II)-heme a. Proline 441 is a binding site for Ca(2+). Residues 453–473 (VSSIGSFIAMISLILFIYILF) form a helical membrane-spanning segment.

It belongs to the heme-copper respiratory oxidase family. Component of the cytochrome c oxidase (complex IV, CIV), a multisubunit enzyme composed of a catalytic core of 3 subunits and several supernumerary subunits. The complex exists as a monomer or a dimer and forms supercomplexes (SCs) in the inner mitochondrial membrane with ubiquinol-cytochrome c oxidoreductase (cytochrome b-c1 complex, complex III, CIII). Requires heme as cofactor. Cu cation is required as a cofactor.

The protein resides in the mitochondrion inner membrane. It carries out the reaction 4 Fe(II)-[cytochrome c] + O2 + 8 H(+)(in) = 4 Fe(III)-[cytochrome c] + 2 H2O + 4 H(+)(out). The protein operates within energy metabolism; oxidative phosphorylation. Its function is as follows. Component of the cytochrome c oxidase, the last enzyme in the mitochondrial electron transport chain which drives oxidative phosphorylation. The respiratory chain contains 3 multisubunit complexes succinate dehydrogenase (complex II, CII), ubiquinol-cytochrome c oxidoreductase (cytochrome b-c1 complex, complex III, CIII) and cytochrome c oxidase (complex IV, CIV), that cooperate to transfer electrons derived from NADH and succinate to molecular oxygen, creating an electrochemical gradient over the inner membrane that drives transmembrane transport and the ATP synthase. Cytochrome c oxidase is the component of the respiratory chain that catalyzes the reduction of oxygen to water. Electrons originating from reduced cytochrome c in the intermembrane space (IMS) are transferred via the dinuclear copper A center (CU(A)) of subunit 2 and heme A of subunit 1 to the active site in subunit 1, a binuclear center (BNC) formed by heme A3 and copper B (CU(B)). The BNC reduces molecular oxygen to 2 water molecules using 4 electrons from cytochrome c in the IMS and 4 protons from the mitochondrial matrix. The protein is Cytochrome c oxidase subunit 1 (COX1) of Vanderwaltozyma polyspora (strain ATCC 22028 / DSM 70294 / BCRC 21397 / CBS 2163 / NBRC 10782 / NRRL Y-8283 / UCD 57-17) (Kluyveromyces polysporus).